Consider the following 64-residue polypeptide: DNA-binding protein 7 (64 aa).

K5 and K7 each carry N6-methyllysine.

It belongs to the 7 kDa DNA-binding/endoribonuclease P2 family. As to quaternary structure, monomer.

It is found in the cytoplasm. Can constrain negative DNA supercoils. May be involved in maintaining the integrity of the genome at high temperature. This is DNA-binding protein 7 from Sulfurisphaera tokodaii (strain DSM 16993 / JCM 10545 / NBRC 100140 / 7) (Sulfolobus tokodaii).